The following is a 461-amino-acid chain: tRNA(Ile)-lysidine synthase (461 aa).

An ATP-binding site is contributed by 26 to 31 (SGGPDS).

It belongs to the tRNA(Ile)-lysidine synthase family.

The protein resides in the cytoplasm. It catalyses the reaction cytidine(34) in tRNA(Ile2) + L-lysine + ATP = lysidine(34) in tRNA(Ile2) + AMP + diphosphate + H(+). Ligates lysine onto the cytidine present at position 34 of the AUA codon-specific tRNA(Ile) that contains the anticodon CAU, in an ATP-dependent manner. Cytidine is converted to lysidine, thus changing the amino acid specificity of the tRNA from methionine to isoleucine. The polypeptide is tRNA(Ile)-lysidine synthase (Clostridium acetobutylicum (strain ATCC 824 / DSM 792 / JCM 1419 / IAM 19013 / LMG 5710 / NBRC 13948 / NRRL B-527 / VKM B-1787 / 2291 / W)).